The sequence spans 151 residues: Transcription antitermination protein NusB (151 aa).

It belongs to the NusB family.

In terms of biological role, involved in transcription antitermination. Required for transcription of ribosomal RNA (rRNA) genes. Binds specifically to the boxA antiterminator sequence of the ribosomal RNA (rrn) operons. In Photobacterium profundum (strain SS9), this protein is Transcription antitermination protein NusB.